We begin with the raw amino-acid sequence, 223 residues long: Guanylate kinase (223 aa).

A disordered region spans residues 1 to 22 (MTADGGPDVRHGTRPEPSGDGR). Residues 7–19 (PDVRHGTRPEPSG) show a composition bias toward basic and acidic residues. One can recognise a Guanylate kinase-like domain in the interval 21 to 201 (GRVVVLSGPS…ACAELVSLLV (181 aa)). 28 to 35 (GPSAVGKS) contributes to the ATP binding site. Positions 204–223 (APDRHDTSGRTGRQTTSHPD) are disordered. Positions 212 to 223 (GRTGRQTTSHPD) are enriched in polar residues.

The protein belongs to the guanylate kinase family.

It is found in the cytoplasm. It carries out the reaction GMP + ATP = GDP + ADP. In terms of biological role, essential for recycling GMP and indirectly, cGMP. The protein is Guanylate kinase of Mycolicibacterium paratuberculosis (strain ATCC BAA-968 / K-10) (Mycobacterium paratuberculosis).